Reading from the N-terminus, the 272-residue chain is Pyrroline-5-carboxylate reductase (272 aa).

It belongs to the pyrroline-5-carboxylate reductase family.

It is found in the cytoplasm. The enzyme catalyses L-proline + NADP(+) = (S)-1-pyrroline-5-carboxylate + NADPH + 2 H(+). It carries out the reaction L-proline + NAD(+) = (S)-1-pyrroline-5-carboxylate + NADH + 2 H(+). The protein operates within amino-acid biosynthesis; L-proline biosynthesis; L-proline from L-glutamate 5-semialdehyde: step 1/1. Its function is as follows. Catalyzes the reduction of 1-pyrroline-5-carboxylate (PCA) to L-proline. The polypeptide is Pyrroline-5-carboxylate reductase (Vibrio alginolyticus).